Consider the following 241-residue polypeptide: tRNA (guanine-N(7)-)-methyltransferase (241 aa).

Positions 1-10 are enriched in polar residues; sequence MTESNETPNT. Residues 1 to 21 are disordered; that stretch reads MTESNETPNTPEAGDESKHRR. Positions 71, 96, 123, and 146 each coordinate S-adenosyl-L-methionine. D146 is an active-site residue. Residues K150, D182, and 219–222 contribute to the substrate site; that span reads TKFE.

The protein belongs to the class I-like SAM-binding methyltransferase superfamily. TrmB family.

It catalyses the reaction guanosine(46) in tRNA + S-adenosyl-L-methionine = N(7)-methylguanosine(46) in tRNA + S-adenosyl-L-homocysteine. Its pathway is tRNA modification; N(7)-methylguanine-tRNA biosynthesis. Catalyzes the formation of N(7)-methylguanine at position 46 (m7G46) in tRNA. This Pseudomonas fluorescens (strain SBW25) protein is tRNA (guanine-N(7)-)-methyltransferase.